The primary structure comprises 281 residues: CCAAT/enhancer-binding protein epsilon (281 aa).

Residues 1 to 30 form a disordered region; it reads MSHGTYYECEPRGGQQPLEFSGGRAGPGEL. Residue Lys121 forms a Glycyl lysine isopeptide (Lys-Gly) (interchain with G-Cter in SUMO2) linkage. Residue Ser181 is modified to Phosphoserine. In terms of domain architecture, bZIP spans 204-267; sequence SLEYRLRRER…DTLRNLFRQI (64 aa). The interval 208–245 is basic motif; it reads RLRRERNNIAVRKSRDKAKRRIMETQQKVLEYMAENER. The tract at residues 246 to 267 is leucine-zipper; sequence LRSRVDQLTQELDTLRNLFRQI.

This sequence belongs to the bZIP family. C/EBP subfamily. As to quaternary structure, binds DNA as a homodimer and as a heterodimer. Can form stable heterodimers with CEBPA, CEBPB and CEBPD. Interacts with GATA1 and SPI1. Interacts with SMARCD2.

The protein localises to the nucleus. Functionally, transcriptional activator. C/EBP are DNA-binding proteins that recognize two different motifs: the CCAAT homology common to many promoters and the enhanced core homology common to many enhancers. Required for the promyelocyte-myelocyte transition in myeloid differentiation. This Rattus norvegicus (Rat) protein is CCAAT/enhancer-binding protein epsilon (Cebpe).